The following is a 193-amino-acid chain: NADPH:quinone oxidoreductase MdaB (193 aa).

Residues 16-23 (SNGQLNDT), 69-72 (GWWM), Tyr108, and 124-127 (TWNA) each bind FAD.

The protein belongs to the oxidoreductase MdaB family. Homodimer. FAD is required as a cofactor.

The protein resides in the cytoplasm. The enzyme catalyses a quinone + NADPH + H(+) = a quinol + NADP(+). In terms of biological role, NADPH-specific quinone reductase. This Escherichia coli O157:H7 protein is NADPH:quinone oxidoreductase MdaB.